Reading from the N-terminus, the 64-residue chain is Large ribosomal subunit protein uL30 (64 aa).

It belongs to the universal ribosomal protein uL30 family. Part of the 50S ribosomal subunit.

This Rhodopseudomonas palustris (strain BisB18) protein is Large ribosomal subunit protein uL30.